The sequence spans 286 residues: Puff II/9-1 protein (286 aa).

A signal peptide spans 1-19 (MKQFIVLTVVLLAIQELQG). The tract at residues 61–235 (ITAIKKDNDF…ENALNTLRCE (175 aa)) is helical. The N-linked (GlcNAc...) asparagine glycan is linked to Asn156.

This Bradysia coprophila (Dark-winged fungus gnat) protein is Puff II/9-1 protein (II/9-1).